We begin with the raw amino-acid sequence, 122 residues long: Short coiled-coil protein (122 aa).

The disordered stretch occupies residues 1-26 (MDGLNTGEEEDSAFTSISLTDDTDHS). Residues 43–101 (NADMDAVDAENQVELEEKTRLINQVLELQHTLEDLSARVDAVKEENLKLKSENQVLGQY) adopt a coiled-coil conformation.

It belongs to the SCOC family. In terms of assembly, homodimer. Interacts with ARL1, ARL2 and ARL3. Directly interacts with FEZ1 and UVRAG. The interaction with UVRAG is reduced by amino acid starvation, but the complex is stabilized in the presence of FEZ1. Interacts with NRBF2.

Its subcellular location is the golgi apparatus membrane. It is found in the golgi apparatus. It localises to the trans-Golgi network. The protein localises to the cytoplasm. The protein resides in the cytosol. In terms of biological role, positive regulator of amino acid starvation-induced autophagy. The chain is Short coiled-coil protein (Scoc) from Rattus norvegicus (Rat).